Reading from the N-terminus, the 159-residue chain is NADH-quinone oxidoreductase subunit B (159 aa).

Positions 37, 38, 102, and 132 each coordinate [4Fe-4S] cluster.

The protein belongs to the complex I 20 kDa subunit family. In terms of assembly, NDH-1 is composed of 14 different subunits. Subunits NuoB, C, D, E, F, and G constitute the peripheral sector of the complex. [4Fe-4S] cluster is required as a cofactor.

The protein localises to the cell inner membrane. The catalysed reaction is a quinone + NADH + 5 H(+)(in) = a quinol + NAD(+) + 4 H(+)(out). NDH-1 shuttles electrons from NADH, via FMN and iron-sulfur (Fe-S) centers, to quinones in the respiratory chain. Couples the redox reaction to proton translocation (for every two electrons transferred, four hydrogen ions are translocated across the cytoplasmic membrane), and thus conserves the redox energy in a proton gradient. The protein is NADH-quinone oxidoreductase subunit B of Vesicomyosocius okutanii subsp. Calyptogena okutanii (strain HA).